Reading from the N-terminus, the 180-residue chain is Prothoracicotropic hormone (180 aa).

The signal sequence occupies residues 1-15; the sequence is MKLLILCVMVHGLLA. The propeptide occupies 16–64; the sequence is EGPGQVLWKEQVVAPEFLLDDREDIASNRNAFFYEDKRSFRPEGLGEQV. 2 disulfides stabilise this stretch: C88–C123 and C111–C175.

Homodimer; disulfide-linked.

The protein localises to the secreted. Its function is as follows. PTTH is a brain secretory polypeptide of insects which stimulates the prothoracic glands to produce and release ecdysone, the steroid essential to insect development. The sequence is that of Prothoracicotropic hormone from Camponotus floridanus (Florida carpenter ant).